The sequence spans 905 residues: Toll-like receptor 3 (905 aa).

Residues 1–25 (MKGCSSYLMYSFGGLLSLWILLVSS) form the signal peptide. One can recognise an LRRNT domain in the interval 26–52 (TNQCTVRYNVADCSHLKLTHIPDDLPS). Topologically, residues 26 to 705 (TNQCTVRYNV…SCKDSAPFEL (680 aa)) are lumenal. Cys29 and Cys38 are oxidised to a cystine. N-linked (GlcNAc...) asparagine glycans are attached at residues Asn53, Asn58, and Asn71. LRR repeat units lie at residues 53–74 (NITV…NFTR), 77–98 (QLAI…LCQI), 101–122 (LLKV…TFVF), 125–146 (NLTE…PFKN), 149–170 (NLIK…TGVQ), and 173–196 (NLQE…EFLG). Cys96 and Cys123 form a disulfide bridge. Asn125 carries N-linked (GlcNAc...) asparagine glycosylation. Asn197 carries N-linked (GlcNAc...) asparagine glycosylation. One copy of the LRR 7 repeat lies at 199-220 (SLRKLDLSSNPLKEFSPGCFQT). 4 N-linked (GlcNAc...) asparagine glycosylation sites follow: Asn248, Asn253, Asn276, and Asn292. LRR repeat units lie at residues 250 to 271 (SIQN…TFSG), 276 to 297 (NLTQ…SFSY), 300 to 321 (SLRY…SFYG), 324 to 345 (NLRY…ASHP), 357 to 378 (YLEY…TFTG), 381 to 401 (SLKY…TNET), 409 to 430 (PLLT…TFSW), 433 to 454 (QLRI…QEWR), 458 to 479 (NIFE…SFAL), 482 to 502 (SLQR…SPSP), 508 to 529 (NLTI…LLEG), 532 to 553 (NLEI…ANPG), 564 to 585 (HLHI…VFKN), 588 to 609 (ELKS…IFDD), and 612 to 633 (SLRS…VFGP). 3 N-linked (GlcNAc...) asparagine glycosylation sites follow: Asn399, Asn414, and Asn425. The N-linked (GlcNAc...) asparagine glycan is linked to Asn508. An LRRCT domain is found at 646–699 (NPFDCTCESISWFVNWINQTHTNISELSTHYLCNTPHHYYGFPLKLFDTSSCKD). Intrachain disulfides connect Cys650–Cys678 and Cys652–Cys697. Asn663 and Asn668 each carry an N-linked (GlcNAc...) asparagine glycan. The helical transmembrane segment at 706–726 (LFIISTSMLLVFILVVLLIHI) threads the bilayer. At 727–905 (EGWRISFYWN…VALGSRNSAH (179 aa)) the chain is on the cytoplasmic side. The TIR domain maps to 755–898 (FEYTAYIIHA…AFHHKLQVAL (144 aa)). Position 760 is a phosphotyrosine (Tyr760). Residues Lys766, Lys813, and Lys832 each participate in a glycyl lysine isopeptide (Lys-Gly) (interchain with G-Cter in ubiquitin) cross-link. Position 859 is a phosphotyrosine (Tyr859).

The protein belongs to the Toll-like receptor family. As to quaternary structure, monomer and homodimer; dimerization is triggered by ligand-binding, the signaling unit is composed of one ds-RNA of around 40 bp and two TLR3 molecules, and lateral clustering of signaling units along the length of the ds-RNA ligand is required for TLR3 signal transduction. Interacts (via transmembrane domain) with UNC93B1; the interaction is required for transport from the ER to the endosomes. Interacts with SRC; upon binding of double-stranded RNA. Interacts with TICAM1 (via the TIR domain) in response to poly(I:C) and this interaction is enhanced in the presence of WDFY1. The tyrosine-phosphorylated form (via TIR domain) interacts with WDFY1 (via WD repeat 2) in response to poly(I:C). Ubiquitinated by RNF170 at Lys-766 via 'Lys-48'-linked ubiquitin chains; leading to TLR3 proteasomal degradation. In terms of processing, TLR3 signaling requires a proteolytic cleavage mediated by cathepsins CTSB and CTSH, the cleavage occurs between amino acids 252 and 346. The cleaved form of TLR3 is the predominant form found in endosomes. Ubiquitinated by TRIM3; leading to recognition and sorting of polyubiquitinated TLR3 by the ESCRT complexes. Ubiquitinated by ZNRF1 via 'Lys-63'-linked ubiquitin chains; leading to TLR3 lysosomal trafficking and degradation. Highly expressed in lung. After intraperitoneal injection of lipopolysaccharide, highly expressed in brain, heart, kidney, liver, lung and spleen.

Its subcellular location is the endoplasmic reticulum membrane. It localises to the endosome membrane. The protein resides in the early endosome. Functionally, key component of innate and adaptive immunity. TLRs (Toll-like receptors) control host immune response against pathogens through recognition of molecular patterns specific to microorganisms. TLR3 is a nucleotide-sensing TLR which is activated by double-stranded RNA, a sign of viral infection. Acts via the adapter TRIF/TICAM1, leading to NF-kappa-B activation, IRF3 nuclear translocation, cytokine secretion and the inflammatory response. This is Toll-like receptor 3 from Mus musculus (Mouse).